The sequence spans 445 residues: Gamma-glutamyl phosphate reductase (445 aa).

It belongs to the gamma-glutamyl phosphate reductase family.

The protein localises to the cytoplasm. The catalysed reaction is L-glutamate 5-semialdehyde + phosphate + NADP(+) = L-glutamyl 5-phosphate + NADPH + H(+). It participates in amino-acid biosynthesis; L-proline biosynthesis; L-glutamate 5-semialdehyde from L-glutamate: step 2/2. Its function is as follows. Catalyzes the NADPH-dependent reduction of L-glutamate 5-phosphate into L-glutamate 5-semialdehyde and phosphate. The product spontaneously undergoes cyclization to form 1-pyrroline-5-carboxylate. This is Gamma-glutamyl phosphate reductase from Persephonella marina (strain DSM 14350 / EX-H1).